Reading from the N-terminus, the 442-residue chain is Large ribosomal subunit protein mL65 (442 aa).

Belongs to the mitochondrion-specific ribosomal protein mL65 family. In terms of assembly, component of the mitochondrial ribosome small subunit (28S) which comprises a 12S rRNA and about 30 distinct proteins.

The protein resides in the mitochondrion. The chain is Large ribosomal subunit protein mL65 (Mrps30) from Mus musculus (Mouse).